Reading from the N-terminus, the 88-residue chain is Phosphocarrier protein HPr (88 aa).

The region spanning 1–88 (MAEKTFKVVS…DTLAKEGLAE (88 aa)) is the HPr domain. Position 12 is a phosphoserine (Ser12). His15 (pros-phosphohistidine intermediate) is an active-site residue. A Phosphoserine; by HPrK/P modification is found at Ser46.

Belongs to the HPr family.

The protein resides in the cytoplasm. Its activity is regulated as follows. Phosphorylation on Ser-46 inhibits the phosphoryl transfer from enzyme I to HPr. General (non sugar-specific) component of the phosphoenolpyruvate-dependent sugar phosphotransferase system (sugar PTS). This major carbohydrate active-transport system catalyzes the phosphorylation of incoming sugar substrates concomitantly with their translocation across the cell membrane. The phosphoryl group from phosphoenolpyruvate (PEP) is transferred to the phosphoryl carrier protein HPr by enzyme I. Phospho-HPr then transfers it to the PTS EIIA domain. Functionally, P-Ser-HPr interacts with the catabolite control protein A (CcpA), forming a complex that binds to DNA at the catabolite response elements cre, operator sites preceding a large number of catabolite-regulated genes. Thus, P-Ser-HPr is a corepressor in carbon catabolite repression (CCR), a mechanism that allows bacteria to coordinate and optimize the utilization of available carbon sources. P-Ser-HPr also plays a role in inducer exclusion, in which it probably interacts with several non-PTS permeases and inhibits their transport activity. In Geobacillus stearothermophilus (Bacillus stearothermophilus), this protein is Phosphocarrier protein HPr (ptsH).